The chain runs to 507 residues: ATP synthase subunit alpha, chloroplastic (507 aa).

Residue 170–177 (GDRQTGKT) coordinates ATP.

It belongs to the ATPase alpha/beta chains family. F-type ATPases have 2 components, CF(1) - the catalytic core - and CF(0) - the membrane proton channel. CF(1) has five subunits: alpha(3), beta(3), gamma(1), delta(1), epsilon(1). CF(0) has four main subunits: a, b, b' and c.

The protein localises to the plastid. The protein resides in the chloroplast thylakoid membrane. It catalyses the reaction ATP + H2O + 4 H(+)(in) = ADP + phosphate + 5 H(+)(out). Produces ATP from ADP in the presence of a proton gradient across the membrane. The alpha chain is a regulatory subunit. The chain is ATP synthase subunit alpha, chloroplastic from Pelargonium hortorum (Common geranium).